The chain runs to 1114 residues: Translation initiation factor IF-2 (1114 aa).

2 disordered regions span residues Ser69 to Ile102 and Ile181 to Ala507. The segment covering Ser85 to Asn96 has biased composition (basic and acidic residues). The span at Ile181–Gly198 shows a compositional bias: polar residues. The span at Ile240–Ile251 shows a compositional bias: low complexity. A compositionally biased stretch (polar residues) spans Ala252–Ile261. Low complexity-rich tracts occupy residues Gly262–Asn278, Asn290–Asn309, and Asn321–Gly337. Basic and acidic residues predominate over residues Asn365–Asn375. Low complexity predominate over residues Asn376–Asn385. Residues Gly417–Arg431 show a composition bias toward basic and acidic residues. The segment covering Lys489 to Arg505 has biased composition (basic residues). The tr-type G domain maps to Arg606–Leu778. Residues Gly615–Thr622 are G1. GTP is bound at residue Gly615–Thr622. The G2 stretch occupies residues Gly640–His644. The G3 stretch occupies residues Asp665–Gly668. GTP is bound by residues Asp665–His669 and Asn719–Asp722. The G4 stretch occupies residues Asn719–Asp722. The tract at residues Ser755–Ile757 is G5.

The protein belongs to the TRAFAC class translation factor GTPase superfamily. Classic translation factor GTPase family. IF-2 subfamily.

It is found in the cytoplasm. One of the essential components for the initiation of protein synthesis. Protects formylmethionyl-tRNA from spontaneous hydrolysis and promotes its binding to the 30S ribosomal subunits. Also involved in the hydrolysis of GTP during the formation of the 70S ribosomal complex. The chain is Translation initiation factor IF-2 from Prochlorococcus marinus (strain MIT 9301).